The sequence spans 212 residues: Probable octanoyltransferase (212 aa).

The BPL/LPL catalytic domain maps to 28–199; sequence GVSEEMILVT…NLETLLQRQE (172 aa). Residues 66-73, 130-132, and 143-145 each bind substrate; these read RGGDATYH, SVG, and GVA. Residue cysteine 161 is the Acyl-thioester intermediate of the active site.

It belongs to the LipB family.

It localises to the cytoplasm. The enzyme catalyses octanoyl-[ACP] + L-lysyl-[protein] = N(6)-octanoyl-L-lysyl-[protein] + holo-[ACP] + H(+). It functions in the pathway protein modification; protein lipoylation via endogenous pathway; protein N(6)-(lipoyl)lysine from octanoyl-[acyl-carrier-protein]: step 1/2. Its function is as follows. Catalyzes the transfer of endogenously produced octanoic acid from octanoyl-acyl-carrier-protein onto the lipoyl domains of lipoate-dependent enzymes. Lipoyl-ACP can also act as a substrate although octanoyl-ACP is likely to be the physiological substrate. The sequence is that of Probable octanoyltransferase from Pyrobaculum arsenaticum (strain DSM 13514 / JCM 11321 / PZ6).